The following is a 282-amino-acid chain: 1D-myo-inositol 2-acetamido-2-deoxy-alpha-D-glucopyranoside deacetylase (282 aa).

Zn(2+) contacts are provided by histidine 6, aspartate 9, and histidine 141.

This sequence belongs to the MshB deacetylase family. Requires Zn(2+) as cofactor.

It catalyses the reaction 1D-myo-inositol 2-acetamido-2-deoxy-alpha-D-glucopyranoside + H2O = 1D-myo-inositol 2-amino-2-deoxy-alpha-D-glucopyranoside + acetate. Catalyzes the deacetylation of 1D-myo-inositol 2-acetamido-2-deoxy-alpha-D-glucopyranoside (GlcNAc-Ins) in the mycothiol biosynthesis pathway. The chain is 1D-myo-inositol 2-acetamido-2-deoxy-alpha-D-glucopyranoside deacetylase from Nocardiopsis dassonvillei (strain ATCC 23218 / DSM 43111 / CIP 107115 / JCM 7437 / KCTC 9190 / NBRC 14626 / NCTC 10488 / NRRL B-5397 / IMRU 509) (Actinomadura dassonvillei).